A 1083-amino-acid polypeptide reads, in one-letter code: Kinesin-like protein klp-19 (1083 aa).

Residues Ser6–Ile328 enclose the Kinesin motor domain. Gly85–Thr92 contacts ATP. Residues Met408–Thr435 are a coiled coil. A compositionally biased stretch (acidic residues) spans Thr458 to Glu471. The segment at Thr458–Asp479 is disordered. The stretch at Leu487–Asp650 forms a coiled coil. Over residues Asp1044–Phe1055 the composition is skewed to polar residues. Residues Asp1044–Leu1083 are disordered.

This sequence belongs to the TRAFAC class myosin-kinesin ATPase superfamily. Kinesin family. In terms of tissue distribution, expressed in the gonad.

It is found in the nucleus. The protein localises to the nucleoplasm. Its subcellular location is the cytoplasm. It localises to the cytoskeleton. The protein resides in the spindle. It is found in the chromosome. In terms of biological role, required for chromosome movement and orientation on spindle poles in mitosis and meiosis. May play a role in early anterior-posterior chromosome movement in mitotic embryos. The protein is Kinesin-like protein klp-19 of Caenorhabditis elegans.